The following is a 156-amino-acid chain: Cellulose synthase operon protein D (156 aa).

The protein operates within glycan metabolism; bacterial cellulose biosynthesis. In terms of biological role, may have a major role in the perfection of crystallization, involved either in the pore structure itself or in the organization of the pores within the linear array of terminal synthesizing complexes (TCs). In Komagataeibacter sucrofermentans (strain ATCC 700178 / DSM 15973 / CECT 7291 / JCM 9730 / LMG 18788 / BPR 2001) (Acetobacter xylinus subsp. sucrofermentans), this protein is Cellulose synthase operon protein D.